Here is a 377-residue protein sequence, read N- to C-terminus: Cobalt-precorrin-5B C(1)-methyltransferase (377 aa).

The disordered stretch occupies residues 1-21; it reads MNPVRQPYDLAAPAPNGMRRG.

This sequence belongs to the CbiD family.

The catalysed reaction is Co-precorrin-5B + S-adenosyl-L-methionine = Co-precorrin-6A + S-adenosyl-L-homocysteine. It functions in the pathway cofactor biosynthesis; adenosylcobalamin biosynthesis; cob(II)yrinate a,c-diamide from sirohydrochlorin (anaerobic route): step 6/10. Functionally, catalyzes the methylation of C-1 in cobalt-precorrin-5B to form cobalt-precorrin-6A. This Chromobacterium violaceum (strain ATCC 12472 / DSM 30191 / JCM 1249 / CCUG 213 / NBRC 12614 / NCIMB 9131 / NCTC 9757 / MK) protein is Cobalt-precorrin-5B C(1)-methyltransferase.